A 275-amino-acid polypeptide reads, in one-letter code: Diaminopimelate epimerase (275 aa).

The substrate site is built by Asn20 and Asn63. The active-site Proton donor is Cys72. Residues 73-74 (GN), Asn179, and 197-198 (ER) each bind substrate. Cys207 (proton acceptor) is an active-site residue. 208–209 (GT) provides a ligand contact to substrate.

The protein belongs to the diaminopimelate epimerase family. As to quaternary structure, homodimer.

It is found in the cytoplasm. It catalyses the reaction (2S,6S)-2,6-diaminopimelate = meso-2,6-diaminopimelate. Its pathway is amino-acid biosynthesis; L-lysine biosynthesis via DAP pathway; DL-2,6-diaminopimelate from LL-2,6-diaminopimelate: step 1/1. Catalyzes the stereoinversion of LL-2,6-diaminopimelate (L,L-DAP) to meso-diaminopimelate (meso-DAP), a precursor of L-lysine and an essential component of the bacterial peptidoglycan. This is Diaminopimelate epimerase from Chlamydia trachomatis serovar L2 (strain ATCC VR-902B / DSM 19102 / 434/Bu).